The sequence spans 441 residues: MIMSTIFALCTPWGKSGVAVIRVSGKDAAKAFLHFGISSSIKPRTATFAHLYNSKGEIIDEVIIVYFVAPSSFTGEDVVEFHTHGSLAVIKMILAELGKIFVPAGPGEFSLRAFLNNKVDLTRAEAIVDLINSETEMQAKQAIRQMSGALEKLYQSWRQQLIDILSNIEAYIDFPEEVNSAALANIGYLLNNLQESLECHLNDDRKGERLRQGIYIAIVGEPNSGKSTLFNHLAKRDIAIVSEYAGTTRDTLEAHIDVAGYPIVIIDTAGIRDSADLIEQEGIRRAKLKAENADFKIVMLPYEKRNVFNNEIMNLIDEKSICVLSKADNITEHELISIFNFSFVPISVCCNRGIEILLNLIKQRVEKDFQFCSTHPFITSERQRLHIQNTLNIVKNMDLELPMEIVAEDLRLSVRELGKVVGVISDEDILDNVFGKFCIGK.

The (6S)-5-formyl-5,6,7,8-tetrahydrofolate site is built by arginine 22, glutamate 80, and lysine 118. The TrmE-type G domain occupies 213 to 366; the sequence is GIYIAIVGEP…LLNLIKQRVE (154 aa). Residues 223–228, 242–248, and 267–270 each bind GTP; these read NSGKST, SEYAGTT, and DTAG. Positions 227 and 248 each coordinate Mg(2+). (6S)-5-formyl-5,6,7,8-tetrahydrofolate is bound at residue lysine 441.

This sequence belongs to the TRAFAC class TrmE-Era-EngA-EngB-Septin-like GTPase superfamily. TrmE GTPase family. Homodimer. Heterotetramer of two MnmE and two MnmG subunits. Requires K(+) as cofactor.

The protein localises to the cytoplasm. Exhibits a very high intrinsic GTPase hydrolysis rate. Involved in the addition of a carboxymethylaminomethyl (cmnm) group at the wobble position (U34) of certain tRNAs, forming tRNA-cmnm(5)s(2)U34. In Ehrlichia canis (strain Jake), this protein is tRNA modification GTPase MnmE.